The following is a 362-amino-acid chain: Tyrosine-protein kinase SRK2 (362 aa).

In terms of domain architecture, SH2 spans 1 to 70 (TFLVRESESK…GLCVNLRQPC (70 aa)). In terms of domain architecture, Protein kinase spans 95 to 348 (ITLIRKLGAG…ALQWRLEDFF (254 aa)). ATP contacts are provided by residues 101–109 (LGAGQFGEV) and K123. D214 acts as the Proton acceptor in catalysis.

Belongs to the protein kinase superfamily. Tyr protein kinase family.

The protein localises to the cytoplasm. It carries out the reaction L-tyrosyl-[protein] + ATP = O-phospho-L-tyrosyl-[protein] + ADP + H(+). The protein is Tyrosine-protein kinase SRK2 (SRK2) of Spongilla lacustris (Freshwater sponge).